The following is a 293-amino-acid chain: Protein transport protein yif1 (293 aa).

Residues 1–139 (MPPKLYHPQP…PPAEDLNSPD (139 aa)) lie on the Cytoplasmic side of the membrane. Residues 140 to 160 (MYIPLMAFTTHILLLCALAGL) traverse the membrane as a helical segment. Residues 161-175 (QDDFQPELFGLRASK) are Lumenal-facing. The chain crosses the membrane as a helical span at residues 176–196 (ACAVVLVEFLATRLGCYLLNI). Residues 197–201 (SSQSQ) are Cytoplasmic-facing. A helical membrane pass occupies residues 202–222 (VLDLLAFSGYKFVGLILTSLS). The Lumenal portion of the chain corresponds to 223–226 (KLFE). Residues 227–247 (MPWVTRFVFLYMYLATAFFLL) traverse the membrane as a helical segment. Topologically, residues 248-271 (RSLKYAVLPESTMAINATITSHQR) are cytoplasmic. Residues 272 to 292 (SRRIYFLFFIAASQILFMYVL) traverse the membrane as a helical segment. Ser293 is a topological domain (lumenal).

This sequence belongs to the YIF1 family. As to quaternary structure, component of the yip1-yif1 complex, composed of at least yif1, yip1 and yos1. The complex interacts with the ER to Golgi SNAREs bos1 and sec22.

Its subcellular location is the endoplasmic reticulum membrane. The protein resides in the golgi apparatus membrane. It localises to the cytoplasmic vesicle. The protein localises to the COPII-coated vesicle. Functionally, required for fusion of ER-derived vesicles with the Golgi during ER-to-Golgi protein transport. May be involved in proper membrane localization of Rab GTPases. This is Protein transport protein yif1 from Schizosaccharomyces pombe (strain 972 / ATCC 24843) (Fission yeast).